Reading from the N-terminus, the 139-residue chain is D-ribose pyranase (139 aa).

The active-site Proton donor is histidine 20. Residues aspartate 28, histidine 106, and 128–130 contribute to the substrate site; that span reads YAN.

It belongs to the RbsD / FucU family. RbsD subfamily. Homodecamer.

Its subcellular location is the cytoplasm. The catalysed reaction is beta-D-ribopyranose = beta-D-ribofuranose. It functions in the pathway carbohydrate metabolism; D-ribose degradation; D-ribose 5-phosphate from beta-D-ribopyranose: step 1/2. Catalyzes the interconversion of beta-pyran and beta-furan forms of D-ribose. The protein is D-ribose pyranase of Salmonella paratyphi B (strain ATCC BAA-1250 / SPB7).